The following is a 543-amino-acid chain: Sensor histidine kinase DcuS (543 aa).

The Cytoplasmic portion of the chain corresponds to 1–20; that stretch reads MRHSLPYRMLRKRPMKLSTT. Residues 21–41 traverse the membrane as a helical segment; it reads VILMVSAVLFSVLLVVHLIYF. The Periplasmic portion of the chain corresponds to 42–181; the sequence is SQISDMTRDG…VTQQINDSRW (140 aa). (R)-malate-binding positions include 107–110, Lys121, 140–142, and Arg147; these read RYSH and GFL. Residues 182-202 form a helical membrane-spanning segment; sequence SIIWSVLFGMLVGLIGTCILV. The Cytoplasmic segment spans residues 203–543; sequence NVLKKILFGL…IPWDGERSNR (341 aa). Positions 212–323 constitute a PAS domain; that stretch reads LEPYEISTLF…IIGAISTFRD (112 aa). The Histidine kinase domain maps to 346–538; the sequence is ERSHEFMNKL…QFFVQIPWDG (193 aa). The residue at position 349 (His349) is a Phosphohistidine; by autocatalysis.

Homodimer. In terms of processing, autophosphorylated. The phosphoryl group is rapidly transferred to DcuR.

The protein localises to the cell inner membrane. The enzyme catalyses ATP + protein L-histidine = ADP + protein N-phospho-L-histidine.. Member of the two-component regulatory system DcuR/DcuS. Involved in the C4-dicarboxylate-stimulated regulation of the genes encoding the anaerobic fumarate respiratory system (frdABCD; nuoAN; dcuB; sdhCDAB; etc.). Weakly regulates the aerobic C4-dicarboxylate transporter dctA. Activates DcuR by phosphorylation. This Escherichia coli O6:H1 (strain CFT073 / ATCC 700928 / UPEC) protein is Sensor histidine kinase DcuS (dcuS).